Here is a 118-residue protein sequence, read N- to C-terminus: Large ribosomal subunit protein bL19 (118 aa).

Belongs to the bacterial ribosomal protein bL19 family.

This protein is located at the 30S-50S ribosomal subunit interface and may play a role in the structure and function of the aminoacyl-tRNA binding site. This is Large ribosomal subunit protein bL19 from Campylobacter jejuni subsp. jejuni serotype O:2 (strain ATCC 700819 / NCTC 11168).